Consider the following 196-residue polypeptide: Acyl-homoserine-lactone synthase (196 aa).

This sequence belongs to the autoinducer synthase family.

It carries out the reaction a fatty acyl-[ACP] + S-adenosyl-L-methionine = an N-acyl-L-homoserine lactone + S-methyl-5'-thioadenosine + holo-[ACP] + H(+). Functionally, required for the synthesis of a yet unknown N-aceyl-homoserine lactone (N-aceyl-HSL), an autoinducer molecule which binds to PhzR and thus regulates phenazine production. The protein is Acyl-homoserine-lactone synthase (phzI) of Pseudomonas chlororaphis (Pseudomonas aureofaciens).